The chain runs to 143 residues: Transcription antitermination protein NusB (143 aa).

This sequence belongs to the NusB family.

In terms of biological role, involved in transcription antitermination. Required for transcription of ribosomal RNA (rRNA) genes. Binds specifically to the boxA antiterminator sequence of the ribosomal RNA (rrn) operons. In Streptomyces griseus subsp. griseus (strain JCM 4626 / CBS 651.72 / NBRC 13350 / KCC S-0626 / ISP 5235), this protein is Transcription antitermination protein NusB.